The chain runs to 540 residues: Solute carrier family 22 member 7 (540 aa).

Helical transmembrane passes span 21-41 (LVLLALPRFLLPMHFLLPIFM), 144-164 (VTSTCFFIGVLLGAVVYGYLS), 172-192 (LLLVAYVSTLALGLMSAASVN), 202-222 (LTGSALAGFTIIVLPLELEWL), 232-252 (VISTTFWTGGVLLLTLVGYLI), 257-277 (WLLLAATLPCVPGIISIWWVP), 344-364 (VSLCCMMMWFGVNFSYYGLTL), 378-398 (LLFGAVEVPSKITVFFLVRLV), 402-422 (LTEAGMLLATALTFGISLLVS), 429-449 (ITALVVIGKAFSEAAFTTAYL), 462-484 (TGMGFTALIGRLGASLAPLVVLL), and 488-510 (WLLLPKLAYGGISFLAACTVLLL).

This sequence belongs to the major facilitator (TC 2.A.1) superfamily. Organic cation transporter (TC 2.A.1.19) family. Abundant expression in male and female kidney. In kidney, expressed at the brush border of the proximal tubule S3 segment (S3) in the outer stripe and medullary rays. In kidney, expression is higher in female than male. Also expressed in female liver.

It localises to the basolateral cell membrane. It is found in the apical cell membrane. Its subcellular location is the cell membrane. It catalyses the reaction orotate(out) + L-glutamate(in) = orotate(in) + L-glutamate(out). The catalysed reaction is 3',5'-cyclic GMP(in) = 3',5'-cyclic GMP(out). The enzyme catalyses GMP(in) = GMP(out). It carries out the reaction 2'-deoxyguanosine(in) = 2'-deoxyguanosine(out). It catalyses the reaction GDP(in) = GDP(out). The catalysed reaction is guanosine(in) = guanosine(out). The enzyme catalyses GTP(in) = GTP(out). It carries out the reaction 3',5'-cyclic AMP(in) = 3',5'-cyclic AMP(out). It catalyses the reaction creatinine(in) = creatinine(out). The catalysed reaction is prostaglandin E2(out) = prostaglandin E2(in). The enzyme catalyses 2-oxoglutarate(in) = 2-oxoglutarate(out). It carries out the reaction glutarate(in) = glutarate(out). It catalyses the reaction urate(out) = urate(in). The catalysed reaction is estrone 3-sulfate(out) = estrone 3-sulfate(in). Its function is as follows. Functions as a Na(+)-independent bidirectional multispecific transporter. Contributes to the renal and hepatic elimination of endogenous organic compounds from the systemic circulation into the urine and bile, respectively. Capable of transporting a wide range of purine and pyrimidine nucleobases, nucleosides, and nucleotides with cGMP, 2'deoxyguanosine and GMP being the preferred substrates. Functions as a pH- and chloride-independent cGMP bidirectional facilitative transporter that can regulate both intracellular and extracellular levels of cGMP and may be involved in cGMP signaling pathways. Mediates orotate/glutamate bidirectional exchange and most likely display a physiological role in hepatic release of glutamate into the blood. Involved in renal secretion and possible reabsorption of creatinine. Able to uptake prostaglandin E2 (PGE2) and may contribute to PGE2 renal excretion. Also transports alpha-ketoglutarate and urate. Unlike human hortolog, able to transport glutarate. Apart from the orotate/glutamate exchange, the counterions for the uptake of other SLC22A7/OAT2 substrates remain to be identified. The polypeptide is Solute carrier family 22 member 7 (Mus musculus (Mouse)).